Reading from the N-terminus, the 388-residue chain is MDALEITQKLISYPTITPKECGIFEYIKSLFPAFKTLECEKNGVKNLFLYRIFNPLKKHAEKEHAKEKHVKENVKPLHFCFAGHIDVVPPGNNWQSDPFKPIIKEGFLYGRGAQDMKGGVGAFLSASLNFNPKTPFLLSILLTSDEEGPGIFGTRLMLEKLKEKDLLPHMAIVAEPTCEKVLGDSIKIGRRGSINGKLILKGVQGHVAYPQKCQNPIDTLASVLPLISGVHLDNGDECFDPSKLVITNLHAGLGANNVTPGSVEIAFNARHSLKTTQESLKEYLEKVLKDLPYTLELESSSSPFITASHSKLTSVLQENILKTCHTTPLLNTKGGTSDARFFSAHGIEVVEFGAINDRIHAVDERVSLKELELLEKVFLGVLEGLSEK.

H84 contributes to the Zn(2+) binding site. Residue D86 is part of the active site. Zn(2+) is bound at residue D115. The Proton acceptor role is filled by E146. The Zn(2+) site is built by E147, E175, and H360.

It belongs to the peptidase M20A family. DapE subfamily. Homodimer. Requires Zn(2+) as cofactor. Co(2+) serves as cofactor.

It carries out the reaction N-succinyl-(2S,6S)-2,6-diaminopimelate + H2O = (2S,6S)-2,6-diaminopimelate + succinate. It participates in amino-acid biosynthesis; L-lysine biosynthesis via DAP pathway; LL-2,6-diaminopimelate from (S)-tetrahydrodipicolinate (succinylase route): step 3/3. Catalyzes the hydrolysis of N-succinyl-L,L-diaminopimelic acid (SDAP), forming succinate and LL-2,6-diaminopimelate (DAP), an intermediate involved in the bacterial biosynthesis of lysine and meso-diaminopimelic acid, an essential component of bacterial cell walls. The chain is Succinyl-diaminopimelate desuccinylase from Helicobacter pylori (strain J99 / ATCC 700824) (Campylobacter pylori J99).